Here is a 238-residue protein sequence, read N- to C-terminus: Calmodulin-binding protein 25 (238 aa).

A compositionally biased stretch (polar residues) spans 68 to 78 (STNTLSSTVSG). A disordered region spans residues 68 to 87 (STNTLSSTVSGASDPEIIGG). The Bipartite nuclear localization signal motif lies at 92-108 (KRNCLLTDGKAAKRRAR). The VQ signature appears at 125–134 (FRQMVQQVTG). The segment at 201-220 (SSVGLPSGKPSATADPGGSA) is disordered.

In terms of assembly, interacts with calmodulin (CaM). Interacts with WRKY25 and WRKY51. Expressed in leaves, flowers and siliques.

The protein resides in the nucleus. Calmodulin-binding protein that functions as a negative regulator of osmotic stress tolerance. In Arabidopsis thaliana (Mouse-ear cress), this protein is Calmodulin-binding protein 25.